The sequence spans 154 residues: SsrA-binding protein (154 aa).

Residues 134–154 (DKREDIKKRDQERELSRRFKN) are disordered.

Belongs to the SmpB family.

It is found in the cytoplasm. Functionally, required for rescue of stalled ribosomes mediated by trans-translation. Binds to transfer-messenger RNA (tmRNA), required for stable association of tmRNA with ribosomes. tmRNA and SmpB together mimic tRNA shape, replacing the anticodon stem-loop with SmpB. tmRNA is encoded by the ssrA gene; the 2 termini fold to resemble tRNA(Ala) and it encodes a 'tag peptide', a short internal open reading frame. During trans-translation Ala-aminoacylated tmRNA acts like a tRNA, entering the A-site of stalled ribosomes, displacing the stalled mRNA. The ribosome then switches to translate the ORF on the tmRNA; the nascent peptide is terminated with the 'tag peptide' encoded by the tmRNA and targeted for degradation. The ribosome is freed to recommence translation, which seems to be the essential function of trans-translation. The chain is SsrA-binding protein from Leuconostoc mesenteroides subsp. mesenteroides (strain ATCC 8293 / DSM 20343 / BCRC 11652 / CCM 1803 / JCM 6124 / NCDO 523 / NBRC 100496 / NCIMB 8023 / NCTC 12954 / NRRL B-1118 / 37Y).